Reading from the N-terminus, the 405-residue chain is MGGVLGMILAGGEGSRLRPLTDSRTKPAVPFGGSYRLIDFALNNFVNADFLKIYVLTQFKSQSLYVHMKKGWNITGITDRFIDPIPAQMRMGKRWYDGTADAIYQNLSFIELAEPEHVCIFGSDHIYKMDIKQMLNFHKEKEAELTVSALRMPLSEASAFGVIEVDENGCMVGFEEKPTNPKSIPGDPENALVSMGNYIFNKDTLCTELEEDAAKEDSSHDFGKDIIPKLFPLGKVYVYDFTTNIIPGEKNTGYWRDVGTIEAYWQAHMDLLSEDAPFSLYNRQWQLHTHYPPLPPATILDSENSKVDINNCMISAGSYIRGAQIHKSILGFRTNVDHNTMISESVILGDVKIGANCSIRKAIIDKNVHIAPGTVIGENPEEDKKNYHVSDEGIVVIPKGAKIGY.

Alpha-D-glucose 1-phosphate-binding positions include Tyr-96, Gly-161, 176 to 177, and Ser-194; that span reads EK.

Belongs to the bacterial/plant glucose-1-phosphate adenylyltransferase family. In terms of assembly, homotetramer.

It carries out the reaction alpha-D-glucose 1-phosphate + ATP + H(+) = ADP-alpha-D-glucose + diphosphate. It functions in the pathway glycan biosynthesis; glycogen biosynthesis. Functionally, involved in the biosynthesis of ADP-glucose, a building block required for the elongation reactions to produce glycogen. Catalyzes the reaction between ATP and alpha-D-glucose 1-phosphate (G1P) to produce pyrophosphate and ADP-Glc. In Photobacterium profundum (strain SS9), this protein is Glucose-1-phosphate adenylyltransferase.